The sequence spans 114 residues: MPKFKQVKNLKIPGVEPPEKVCSDPNCPWHGTLRVRGVLLEGVVAKARARRMVVVQHVYLYYDKKYNRYERRSKKIHAHLPDCISVKEGDVVVIGETMPISKTVKFTVLGVKRR.

This sequence belongs to the universal ribosomal protein uS17 family. Part of the 30S ribosomal subunit.

Its function is as follows. One of the primary rRNA binding proteins, it binds specifically to the 5'-end of 16S ribosomal RNA. The polypeptide is Small ribosomal subunit protein uS17 (Aeropyrum pernix (strain ATCC 700893 / DSM 11879 / JCM 9820 / NBRC 100138 / K1)).